The following is a 159-amino-acid chain: Ribosomal RNA large subunit methyltransferase H (159 aa).

Residues L76, G108, and 127–132 (FGLLTF) each bind S-adenosyl-L-methionine.

The protein belongs to the RNA methyltransferase RlmH family. As to quaternary structure, homodimer.

It is found in the cytoplasm. The catalysed reaction is pseudouridine(1915) in 23S rRNA + S-adenosyl-L-methionine = N(3)-methylpseudouridine(1915) in 23S rRNA + S-adenosyl-L-homocysteine + H(+). In terms of biological role, specifically methylates the pseudouridine at position 1915 (m3Psi1915) in 23S rRNA. The sequence is that of Ribosomal RNA large subunit methyltransferase H from Streptococcus thermophilus (strain ATCC BAA-491 / LMD-9).